The primary structure comprises 1222 residues: ATP-dependent helicase/nuclease subunit A (1222 aa).

Residues 39–495 (QKRTAQQIEA…ILLKENFRSQ (457 aa)) enclose the UvrD-like helicase ATP-binding domain. 60–67 (ASAGSGKT) lines the ATP pocket. In terms of domain architecture, UvrD-like helicase C-terminal spans 524-810 (QLIAGSHAQT…NLMTIHKSKG (287 aa)).

This sequence belongs to the helicase family. AddA subfamily. Heterodimer of AddA and AddB/RexB. Mg(2+) serves as cofactor.

The catalysed reaction is Couples ATP hydrolysis with the unwinding of duplex DNA by translocating in the 3'-5' direction.. It carries out the reaction ATP + H2O = ADP + phosphate + H(+). The heterodimer acts as both an ATP-dependent DNA helicase and an ATP-dependent, dual-direction single-stranded exonuclease. Recognizes the chi site generating a DNA molecule suitable for the initiation of homologous recombination. The AddA nuclease domain is required for chi fragment generation; this subunit has the helicase and 3' -&gt; 5' nuclease activities. The sequence is that of ATP-dependent helicase/nuclease subunit A from Streptococcus pyogenes serotype M4 (strain MGAS10750).